The sequence spans 404 residues: Tryptophan synthase beta chain (404 aa).

At Lys-90 the chain carries N6-(pyridoxal phosphate)lysine.

Belongs to the TrpB family. As to quaternary structure, tetramer of two alpha and two beta chains. Pyridoxal 5'-phosphate is required as a cofactor.

It carries out the reaction (1S,2R)-1-C-(indol-3-yl)glycerol 3-phosphate + L-serine = D-glyceraldehyde 3-phosphate + L-tryptophan + H2O. It functions in the pathway amino-acid biosynthesis; L-tryptophan biosynthesis; L-tryptophan from chorismate: step 5/5. Its function is as follows. The beta subunit is responsible for the synthesis of L-tryptophan from indole and L-serine. The polypeptide is Tryptophan synthase beta chain (Geobacillus thermodenitrificans (strain NG80-2)).